The primary structure comprises 350 residues: Tetraacyldisaccharide 4'-kinase (350 aa).

48-55 is a binding site for ATP; the sequence is SAGGTGKT.

The protein belongs to the LpxK family.

The enzyme catalyses a lipid A disaccharide + ATP = a lipid IVA + ADP + H(+). It participates in glycolipid biosynthesis; lipid IV(A) biosynthesis; lipid IV(A) from (3R)-3-hydroxytetradecanoyl-[acyl-carrier-protein] and UDP-N-acetyl-alpha-D-glucosamine: step 6/6. Functionally, transfers the gamma-phosphate of ATP to the 4'-position of a tetraacyldisaccharide 1-phosphate intermediate (termed DS-1-P) to form tetraacyldisaccharide 1,4'-bis-phosphate (lipid IVA). This Chlorobium limicola (strain DSM 245 / NBRC 103803 / 6330) protein is Tetraacyldisaccharide 4'-kinase.